Here is an 884-residue protein sequence, read N- to C-terminus: Translation initiation factor IF-2 (884 aa).

Positions 58 to 248 are disordered; sequence PEKVEQKRVR…GKTESVETEE (191 aa). Residues 66–77 show a composition bias toward basic residues; the sequence is VRSNVIRKRRQP. Positions 87–106 are enriched in low complexity; the sequence is EAPAAQAPEAEEVTAPTAEE. The span at 172-183 shows a compositional bias: basic residues; sequence SRKKAKAKKHQA. Over residues 207-223 the composition is skewed to low complexity; sequence DTAPADSPAAPAAATPA. A compositionally biased stretch (basic residues) spans 229-239; that stretch reads KPSRKDRKKRG. Positions 384-553 constitute a tr-type G domain; it reads KRAPVVTIMG…LLQAEMLELK (170 aa). The interval 393–400 is G1; it reads GHVDHGKT. Residue 393–400 coordinates GTP; sequence GHVDHGKT. The tract at residues 418-422 is G2; the sequence is GITQH. The segment at 439-442 is G3; sequence DTPG. GTP is bound by residues 439 to 443 and 493 to 496; these read DTPGH and NKID. The segment at 493–496 is G4; it reads NKID. The tract at residues 529–531 is G5; sequence SAK.

It belongs to the TRAFAC class translation factor GTPase superfamily. Classic translation factor GTPase family. IF-2 subfamily.

It localises to the cytoplasm. One of the essential components for the initiation of protein synthesis. Protects formylmethionyl-tRNA from spontaneous hydrolysis and promotes its binding to the 30S ribosomal subunits. Also involved in the hydrolysis of GTP during the formation of the 70S ribosomal complex. The chain is Translation initiation factor IF-2 from Desulfosudis oleivorans (strain DSM 6200 / JCM 39069 / Hxd3) (Desulfococcus oleovorans).